The primary structure comprises 224 residues: tRNA (guanine-N(7)-)-methyltransferase (224 aa).

S-adenosyl-L-methionine is bound by residues E54, E79, E106, and D129. D129 is an active-site residue. 2 residues coordinate substrate: K133 and D165.

It belongs to the class I-like SAM-binding methyltransferase superfamily. TrmB family.

The enzyme catalyses guanosine(46) in tRNA + S-adenosyl-L-methionine = N(7)-methylguanosine(46) in tRNA + S-adenosyl-L-homocysteine. The protein operates within tRNA modification; N(7)-methylguanine-tRNA biosynthesis. Functionally, catalyzes the formation of N(7)-methylguanine at position 46 (m7G46) in tRNA. This is tRNA (guanine-N(7)-)-methyltransferase from Chlamydia muridarum (strain MoPn / Nigg).